Here is a 633-residue protein sequence, read N- to C-terminus: Peptidoglycan D,D-transpeptidase MrdA (633 aa).

A helical transmembrane segment spans residues 22–42 (LVAFLGILLLTGVLIANLYNL). Ser-330 functions as the Acyl-ester intermediate in the catalytic mechanism.

It belongs to the transpeptidase family. MrdA subfamily.

The protein resides in the cell inner membrane. The enzyme catalyses Preferential cleavage: (Ac)2-L-Lys-D-Ala-|-D-Ala. Also transpeptidation of peptidyl-alanyl moieties that are N-acyl substituents of D-alanine.. The protein operates within cell wall biogenesis; peptidoglycan biosynthesis. In terms of biological role, catalyzes cross-linking of the peptidoglycan cell wall. This Escherichia coli O157:H7 protein is Peptidoglycan D,D-transpeptidase MrdA.